A 126-amino-acid chain; its full sequence is Lymphocyte antigen 6E (126 aa).

Positions 1–20 (MKAFLFAVLAAVLCVERAHT) are cleaved as a signal peptide. In terms of domain architecture, UPAR/Ly6 spans 21–98 (LICFSCSDAS…CCDSFLCNIS (78 aa)). Intrachain disulfides connect C23/C48, C26/C35, C41/C69, C73/C89, and C90/C95. N96 is a glycosylation site (N-linked (GlcNAc...) asparagine). S98 is lipidated: GPI-anchor amidated serine. The propeptide at 99 to 126 (GSSSVKASYAVLALGILVSFVYVLRARE) is removed in mature form.

In terms of tissue distribution, expressed by thymic blast cells.

It localises to the cell membrane. In Gallus gallus (Chicken), this protein is Lymphocyte antigen 6E (LY6E).